Here is a 364-residue protein sequence, read N- to C-terminus: Sulfate/thiosulfate import ATP-binding protein CysA (364 aa).

Residues 3–237 (IEIARIKKSF…PATRFVLEFM (235 aa)) enclose the ABC transporter domain. Residue 35 to 42 (GPSGSGKT) participates in ATP binding.

It belongs to the ABC transporter superfamily. Sulfate/tungstate importer (TC 3.A.1.6) family. As to quaternary structure, the complex is composed of two ATP-binding proteins (CysA), two transmembrane proteins (CysT and CysW) and a solute-binding protein (CysP).

It is found in the cell inner membrane. It carries out the reaction sulfate(out) + ATP + H2O = sulfate(in) + ADP + phosphate + H(+). It catalyses the reaction thiosulfate(out) + ATP + H2O = thiosulfate(in) + ADP + phosphate + H(+). In terms of biological role, part of the ABC transporter complex CysAWTP involved in sulfate/thiosulfate import. Responsible for energy coupling to the transport system. The protein is Sulfate/thiosulfate import ATP-binding protein CysA of Salmonella typhi.